Consider the following 257-residue polypeptide: Homeobox protein goosecoid (257 aa).

Residues 160-219 constitute a DNA-binding region (homeobox); the sequence is KRRHRTIFTDEQLEALENLFQETKYPDVGTREQLARKVHLREEKVEVWFKNRRAKWRRQK. The disordered stretch occupies residues 213–257; the sequence is AKWRRQKRSSSEESENAEKWNKTSSSKASPEKREEEGKSDLDSDS. Positions 241-257 are enriched in basic and acidic residues; the sequence is SPEKREEEGKSDLDSDS.

This sequence belongs to the paired homeobox family. Bicoid subfamily.

The protein localises to the nucleus. Its function is as follows. Regulates chordin (CHRD). May play a role in spatial programing within discrete embryonic fields or lineage compartments during organogenesis. In concert with NKX3-2, plays a role in defining the structural components of the middle ear; required for the development of the entire tympanic ring. Probably involved in the regulatory networks that define neural crest cell fate specification and determine mesoderm cell lineages in mammals. The protein is Homeobox protein goosecoid (GSC) of Homo sapiens (Human).